The chain runs to 372 residues: Putative KilA-N domain-containing protein L32 (372 aa).

Over residues methionine 1–arginine 12 the composition is skewed to basic residues. Residues methionine 1–phenylalanine 129 form a disordered region. The span at arginine 14–arginine 36 shows a compositional bias: basic and acidic residues. A compositionally biased stretch (basic residues) spans serine 37–serine 53. The span at glutamate 79 to serine 120 shows a compositional bias: acidic residues. The KilA-N domain occupies lysine 151–tryptophan 255.

The sequence is that of Putative KilA-N domain-containing protein L32 from Acanthamoeba polyphaga (Amoeba).